Consider the following 324-residue polypeptide: Protoheme IX farnesyltransferase (324 aa).

9 helical membrane passes run 31–51, 53–73, 104–124, 125–145, 153–173, 181–201, 222–242, 243–263, and 285–305; these read LIVLFLITTAAGMWVAARGEV, PVLALITLLTGAMAAGSANTI, LVFAIALAVGAFSLQTLCANL, LSACLEMAGIAVYVGVYTHWL, IVIGGAAGAIPPLVGWAAVTG, VLFAIIFIWTPPHFWPLAMLI, TAWQIFGYTLVLLPTTLLLVY, PLHACGLIYGAIALVLGVVFI, and FSILYMMILCAAMGIDSLPLT.

The protein belongs to the UbiA prenyltransferase family. Protoheme IX farnesyltransferase subfamily.

Its subcellular location is the cell inner membrane. It carries out the reaction heme b + (2E,6E)-farnesyl diphosphate + H2O = Fe(II)-heme o + diphosphate. The protein operates within porphyrin-containing compound metabolism; heme O biosynthesis; heme O from protoheme: step 1/1. Functionally, converts heme B (protoheme IX) to heme O by substitution of the vinyl group on carbon 2 of heme B porphyrin ring with a hydroxyethyl farnesyl side group. The protein is Protoheme IX farnesyltransferase of Cyanothece sp. (strain PCC 7425 / ATCC 29141).